The sequence spans 481 residues: uncharacterized protein (481 aa).

This is an uncharacterized protein from Cryphonectria parasitica (Chestnut blight fungus).